The primary structure comprises 84 residues: U2-theraphotoxin-Cg1b 2 (84 aa).

Positions 1–21 (MKVSVLITLAVLGVMFLLTSA) are cleaved as a signal peptide. A propeptide spanning residues 22-48 (EERGSDQMDSPAWLKSMEIIFQSEERE) is cleaved from the precursor. Intrachain disulfides connect Cys49/Cys63, Cys56/Cys68, and Cys62/Cys76.

The protein belongs to the neurotoxin 10 (Hwtx-1) family. 06 (F4b) subfamily. As to expression, expressed by the venom gland.

The protein resides in the secreted. In terms of biological role, probable ion channel inhibitor. The sequence is that of U2-theraphotoxin-Cg1b 2 from Chilobrachys guangxiensis (Chinese earth tiger tarantula).